A 203-amino-acid chain; its full sequence is Cell division protein SepF (203 aa).

Disordered stretches follow at residues 26–51 and 167–203; these read DGEL…RRGQ and GTAS…WRNQ. Composition is skewed to basic and acidic residues over residues 39–50 and 183–203; these read EPPRRSAPERRG and RRSE…WRNQ.

This sequence belongs to the SepF family. In terms of assembly, homodimer. Interacts with FtsZ.

The protein resides in the cytoplasm. In terms of biological role, cell division protein that is part of the divisome complex and is recruited early to the Z-ring. Probably stimulates Z-ring formation, perhaps through the cross-linking of FtsZ protofilaments. Its function overlaps with FtsA. In Symbiobacterium thermophilum (strain DSM 24528 / JCM 14929 / IAM 14863 / T), this protein is Cell division protein SepF.